Here is an 87-residue protein sequence, read N- to C-terminus: Small ribosomal subunit protein bS20 (87 aa).

The protein belongs to the bacterial ribosomal protein bS20 family.

Its function is as follows. Binds directly to 16S ribosomal RNA. This chain is Small ribosomal subunit protein bS20, found in Shigella flexneri serotype 5b (strain 8401).